A 102-amino-acid chain; its full sequence is Citrate lyase acyl carrier protein (102 aa).

The residue at position 14 (S14) is an O-(phosphoribosyl dephospho-coenzyme A)serine.

Belongs to the CitD family. In terms of assembly, oligomer with a subunit composition of (alpha,beta,gamma)6.

The protein localises to the cytoplasm. In terms of biological role, covalent carrier of the coenzyme of citrate lyase. In Streptococcus equi subsp. zooepidemicus (strain H70), this protein is Citrate lyase acyl carrier protein.